A 1524-amino-acid chain; its full sequence is MAMSNGNNDFVVLSNSSIATSAANPSPLTPCDGDHAAQQLTPKEATRTKVSPNGCLQLNGTVKSSFLPLDNQRMPQMLPQCCHPCPYHHPLTSHSSHQECHPEAGPAAPSALASCCMQPHSEYSASLCPNHSPVYQTTCCLQPSPSFCLHHPWPDHFQHQPVQQHIANIRPSRPFKLPKSYAALIADWPVVVLGMCTMFIVVCALVGVLVPELPDFSDPLLGFEPRGTAIGQRLVTWNNMVKNTGYKATLANYPFKYADEQAKSHRDDRWSDDHYEREKREVDWNFHKDSFFCDVPSDRYSRVVFTSSGGETLWNLPAIKSMCNVDNSRIRSHPQFGDLCQRTTAASCCPSWTLGNYIAILNNRSSCQKIVERDVSHTLKLLRTCAKHYQNGTLGPDCWDMAARRKDQLKCTNVPRKCTKYNAVYQILHYLVDKDFMTPKTADYATPALKYSMLFSPTEKGESMMNIYLDNFENWNSSDGVTTITGIEFGIKHSLFQDYLLMDTVYPAIAIVIVLLVMCVYTKSMFITLMTMFAIISSLIVSYFLYRVVFHFEFFPFMNLTALIILVGIGADDAFVLCDVWNYTKFDKPHAETSETVSITLQHAALSMFVTSFTTAAAFYANYVSNITAIRCFGVYAGTAILVNYVLMVTWLPAVVVLHERYLLNIFTCFKKPQQQIYDNKSCWTVACQKCHKVLFAISEASRIFFEKVLPCIVIKFRYLWLFWFLALTVGGAYIVCINPKMKLPSLELSEFQVFRSSHPFERYDAEYKKLFMFERVHHGEELHMPITVIWGVSPEDNGNPLNPKSKGKLTLDSSFNIASPASQAWILHFCQKLRNQTFFYQTDEQDFTSCFIETFKQWMENQDCDEPALYPCCSHWSFPYKQEIFELCIKRAIMELERSTGYHLDSKTPGPRFDINDTIRAVVLEFQSTYLFTLAYEKMHQFYKEVDSWISSELSSAPEGLSNGWFVSNLEFYDLQDSLSDGTLIAMGLSVAVAFSVMLLTTWNIIISLYAIISIAGTIFVTVGSLVLLGWELNVLESVTISVAVGLSVDFAVHYGVAYRLAPDPDREGKVIFSLSRVGSAMAMAALTTFVAGAMMMPSTVLAYTQLGTFMMLIMCISWAFATFFFQCMCRCLGPQGTCGQIPLPKKLQCSAFSHALSTSPSDKGQSKTHTINAYHLDPRGPKSELEHEFYELEPLASHSCTAPEKTTYEETHICSEFFNSQAKNLGMPVHAAYNSELSKSTESDAGSALLQPPLEQHTVCHFFSLNQRCSCPDAYKHLNYGPHSCQQMGDCLCHQCSPTTSSFVQIQNGVAPLKATHQAVEGFVHPITHIHHCPCLQGRVKPAGMQNSLPRNFFLHPVQHIQAQEKIGKTNVHSLQRSIEEHLPKMAEPSSFVCRSTGSLLKTCCDPENKQRELCKNRDVSNLESSGGTENKAGGKVELSLSQTDASVNSEHFNQNEPKVLFNHLMGEAGCRSCPNNSQSCGRIVRVKCNSVDCQMPNMEANVPAVLTHSELSGESLLIKTL.

Asparagine 59 carries N-linked (GlcNAc...) asparagine glycosylation. 4 consecutive transmembrane segments (helical) span residues 190 to 210 (VVVL…GVLV), 500 to 520 (LLMD…VMCV), 525 to 545 (MFIT…SYFL), and 549 to 569 (VFHF…LVGI). Positions 486-658 (GIEFGIKHSL…VTWLPAVVVL (173 aa)) constitute an SSD domain. A glycan (N-linked (GlcNAc...) asparagine) is linked at asparagine 582. Helical transmembrane passes span 604–624 (AALS…ANYV), 638–658 (GTAI…VVVL), 719–739 (YLWL…VCIN), 988–1008 (MGLS…NIII), 1010–1030 (LYAI…LVLL), 1040–1060 (VTIS…GVAY), 1079–1099 (VGSA…MMMP), and 1107–1127 (QLGT…TFFF).

Belongs to the dispatched family. In terms of assembly, interacts with SHH via the cholesterol anchor of the dually lipid-modified SHH (ShhNp).

It localises to the membrane. Functionally, functions in hedgehog (Hh) signaling. Regulates the release and extracellular accumulation of cholesterol-modified hedgehog proteins and is hence required for effective production of the Hh signal. Synergizes with SCUBE2 to cause an increase in SHH secretion. This Homo sapiens (Human) protein is Protein dispatched homolog 1 (DISP1).